The chain runs to 368 residues: 3-isopropylmalate dehydrogenase (368 aa).

80-93 (GPKWDNLEFSKKPE) is an NAD(+) binding site. Substrate is bound by residues Arg100, Arg110, Arg138, and Asp229. Positions 229, 253, and 257 each coordinate Mg(2+). 292–304 (GSAPDIAGKEIAN) lines the NAD(+) pocket.

The protein belongs to the isocitrate and isopropylmalate dehydrogenases family. LeuB type 1 subfamily. As to quaternary structure, homodimer. The cofactor is Mg(2+). It depends on Mn(2+) as a cofactor.

The protein resides in the cytoplasm. It catalyses the reaction (2R,3S)-3-isopropylmalate + NAD(+) = 4-methyl-2-oxopentanoate + CO2 + NADH. It functions in the pathway amino-acid biosynthesis; L-leucine biosynthesis; L-leucine from 3-methyl-2-oxobutanoate: step 3/4. In terms of biological role, catalyzes the oxidation of 3-carboxy-2-hydroxy-4-methylpentanoate (3-isopropylmalate) to 3-carboxy-4-methyl-2-oxopentanoate. The product decarboxylates to 4-methyl-2 oxopentanoate. The sequence is that of 3-isopropylmalate dehydrogenase from Pelagibacter ubique (strain HTCC1062).